The following is a 484-amino-acid chain: UDP-N-acetylmuramoyl-L-alanyl-D-glutamate--L-lysine ligase (484 aa).

Ser43 is a UDP-N-acetyl-alpha-D-muramoyl-L-alanyl-D-glutamate binding site. ATP is bound at residue 119-125; sequence GTKGKTT. UDP-N-acetyl-alpha-D-muramoyl-L-alanyl-D-glutamate is bound by residues 161–162, Ser188, and Arg196; that span reads TT. Position 230 is an N6-carboxylysine (Lys230). Positions 405–408 match the L-lysine recognition motif motif; it reads DDPN.

This sequence belongs to the MurCDEF family. MurE subfamily. Post-translationally, carboxylation is probably crucial for Mg(2+) binding and, consequently, for the gamma-phosphate positioning of ATP.

It localises to the cytoplasm. It carries out the reaction UDP-N-acetyl-alpha-D-muramoyl-L-alanyl-D-glutamate + L-lysine + ATP = UDP-N-acetyl-alpha-D-muramoyl-L-alanyl-gamma-D-glutamyl-L-lysine + ADP + phosphate + H(+). The protein operates within cell wall biogenesis; peptidoglycan biosynthesis. In terms of biological role, catalyzes the addition of L-lysine to the nucleotide precursor UDP-N-acetylmuramoyl-L-alanyl-D-glutamate (UMAG) in the biosynthesis of bacterial cell-wall peptidoglycan. The sequence is that of UDP-N-acetylmuramoyl-L-alanyl-D-glutamate--L-lysine ligase from Streptococcus agalactiae serotype Ia (strain ATCC 27591 / A909 / CDC SS700).